The following is a 433-amino-acid chain: MLDIQLLRKDLDGVAKRLADRGYTLDVAAFSALEAERRAIQTRTEELQARRNTLSKQIGAMKAKGEDTSAVMAEVGGIGDEMKASAAKLDEIQARLSELLLGMPNLAHESVPVGKDEADNVEVRRWGTPRQFDFDVKDHVDIGTPLGLDFETGAKLAGARFTMLRGPIARLHRALAQFMLDTHTQQHGYSETYTPYIVNPEILYGTGQLPKFADDMFRVEKGGAENTVTQYLISTSEISLTNTVRESIVEASALPIKLTAHSPCFRSEAGSYGRDTRGMIRQHQFDKVEMVQIVAPESSYAALDEMVGHAEAILQKLGLPYRVVALCTGDMGFSAAKTFDLEVWLPAQNTYREISSCSNTEAFQARRMQARFRNAQGKPELVHTLNGSGLAVGRTLVAVLENYQNADGSVTVPEVLRPYMGGLERIDAPAQAS.

An L-serine-binding site is contributed by 235-237 (TSE). 266 to 268 (RSE) is an ATP binding site. Glu289 contacts L-serine. 353–356 (EISS) is a binding site for ATP. Ser388 lines the L-serine pocket.

This sequence belongs to the class-II aminoacyl-tRNA synthetase family. Type-1 seryl-tRNA synthetase subfamily. In terms of assembly, homodimer. The tRNA molecule binds across the dimer.

It localises to the cytoplasm. The enzyme catalyses tRNA(Ser) + L-serine + ATP = L-seryl-tRNA(Ser) + AMP + diphosphate + H(+). It carries out the reaction tRNA(Sec) + L-serine + ATP = L-seryl-tRNA(Sec) + AMP + diphosphate + H(+). It functions in the pathway aminoacyl-tRNA biosynthesis; selenocysteinyl-tRNA(Sec) biosynthesis; L-seryl-tRNA(Sec) from L-serine and tRNA(Sec): step 1/1. In terms of biological role, catalyzes the attachment of serine to tRNA(Ser). Is also able to aminoacylate tRNA(Sec) with serine, to form the misacylated tRNA L-seryl-tRNA(Sec), which will be further converted into selenocysteinyl-tRNA(Sec). The polypeptide is Serine--tRNA ligase (Burkholderia cepacia (Pseudomonas cepacia)).